A 542-amino-acid chain; its full sequence is MTRYIFITGGVVSSLGKGLASAALGALLQARGYSVRLRKLDPYLNVDPGTMSPIQHGEVYVTDDGAETDLDLGHYERFTGVPASRADNITTGRIYQEIIQRERRGDYLGGTVQVIPHVTDAIKEFVLSGNLDVDFVLCEIGGTVGDIEGLPFFEAIRQLGNELDRGQTCYIHLTLLPFIPSAGEMKTKPTQHSVKELRSIGIQPDILMCRCDRPIPKDERRKIALFCNVRETAVIQAMDVDTIYDVPNAYHLEGLDDEVLSVFGIKGSKEPNLAKWQTIAHNIREPEGDVTIAIVGKYTGLKDAYKSLSEALVHGGIANKVRVNVKWVESEVFDTEDTAFYLEDVDGILVPGGFGERGSEGKIRAAQFARTRNVPYFGICFGMQMAVIEALRNVGGLEGASSTEFGPTNEPVVGLMTEWMRENELVKRAAHGDLGGTMRLGAYDAMLAEGSRVAQIYGSTVISERHRHRYEVNMTYREQIEAAGLLMSGVSPDGLLPEIIEIPDHPWYIGVQYHPELKSKPFEPHPLFRSFVEAAVEQSRLV.

Residues Met1 to Ile265 form an amidoligase domain region. Position 13 (Ser13) interacts with CTP. Ser13 contributes to the UTP binding site. ATP is bound by residues Ser14–Leu19 and Asp71. 2 residues coordinate Mg(2+): Asp71 and Glu139. Residues Asp146–Glu148, Lys186–Gln191, and Lys222 each bind CTP. Residues Lys186–Gln191 and Lys222 each bind UTP. In terms of domain architecture, Glutamine amidotransferase type-1 spans Thr291–Leu541. Residue Gly353 coordinates L-glutamine. The Nucleophile; for glutamine hydrolysis role is filled by Cys380. Residues Phe381–Gln384, Glu404, and Arg469 each bind L-glutamine. Active-site residues include His514 and Glu516.

It belongs to the CTP synthase family. Homotetramer.

The catalysed reaction is UTP + L-glutamine + ATP + H2O = CTP + L-glutamate + ADP + phosphate + 2 H(+). It catalyses the reaction L-glutamine + H2O = L-glutamate + NH4(+). It carries out the reaction UTP + NH4(+) + ATP = CTP + ADP + phosphate + 2 H(+). Its pathway is pyrimidine metabolism; CTP biosynthesis via de novo pathway; CTP from UDP: step 2/2. Its activity is regulated as follows. Allosterically activated by GTP, when glutamine is the substrate; GTP has no effect on the reaction when ammonia is the substrate. The allosteric effector GTP functions by stabilizing the protein conformation that binds the tetrahedral intermediate(s) formed during glutamine hydrolysis. Inhibited by the product CTP, via allosteric rather than competitive inhibition. Catalyzes the ATP-dependent amination of UTP to CTP with either L-glutamine or ammonia as the source of nitrogen. Regulates intracellular CTP levels through interactions with the four ribonucleotide triphosphates. This Parvibaculum lavamentivorans (strain DS-1 / DSM 13023 / NCIMB 13966) protein is CTP synthase.